Consider the following 445-residue polypeptide: Phosphoglucosamine mutase (445 aa).

S104 functions as the Phosphoserine intermediate in the catalytic mechanism. 4 residues coordinate Mg(2+): S104, D243, D245, and D247. Position 104 is a phosphoserine (S104).

It belongs to the phosphohexose mutase family. Requires Mg(2+) as cofactor. In terms of processing, activated by phosphorylation.

The enzyme catalyses alpha-D-glucosamine 1-phosphate = D-glucosamine 6-phosphate. Its function is as follows. Catalyzes the conversion of glucosamine-6-phosphate to glucosamine-1-phosphate. The protein is Phosphoglucosamine mutase of Chromobacterium violaceum (strain ATCC 12472 / DSM 30191 / JCM 1249 / CCUG 213 / NBRC 12614 / NCIMB 9131 / NCTC 9757 / MK).